A 234-amino-acid chain; its full sequence is Leucyl/phenylalanyl-tRNA--protein transferase (234 aa).

Belongs to the L/F-transferase family.

Its subcellular location is the cytoplasm. The catalysed reaction is N-terminal L-lysyl-[protein] + L-leucyl-tRNA(Leu) = N-terminal L-leucyl-L-lysyl-[protein] + tRNA(Leu) + H(+). It catalyses the reaction N-terminal L-arginyl-[protein] + L-leucyl-tRNA(Leu) = N-terminal L-leucyl-L-arginyl-[protein] + tRNA(Leu) + H(+). The enzyme catalyses L-phenylalanyl-tRNA(Phe) + an N-terminal L-alpha-aminoacyl-[protein] = an N-terminal L-phenylalanyl-L-alpha-aminoacyl-[protein] + tRNA(Phe). Functionally, functions in the N-end rule pathway of protein degradation where it conjugates Leu, Phe and, less efficiently, Met from aminoacyl-tRNAs to the N-termini of proteins containing an N-terminal arginine or lysine. The sequence is that of Leucyl/phenylalanyl-tRNA--protein transferase from Shigella flexneri serotype 5b (strain 8401).